The sequence spans 239 residues: Purine nucleoside phosphorylase DeoD-type (239 aa).

His5 is a binding site for a purine D-ribonucleoside. Residues Gly21 and Arg25 each coordinate phosphate. Residue Lys27 is modified to N6-acetyllysine. Residues Arg44 and 88–91 (RVGS) each bind phosphate. A purine D-ribonucleoside contacts are provided by residues 180-182 (EME) and 204-205 (SD). Asp205 serves as the catalytic Proton donor.

It belongs to the PNP/UDP phosphorylase family. Homohexamer; trimer of homodimers.

The enzyme catalyses a purine D-ribonucleoside + phosphate = a purine nucleobase + alpha-D-ribose 1-phosphate. It catalyses the reaction a purine 2'-deoxy-D-ribonucleoside + phosphate = a purine nucleobase + 2-deoxy-alpha-D-ribose 1-phosphate. Its function is as follows. Catalyzes the reversible phosphorolytic breakdown of the N-glycosidic bond in the beta-(deoxy)ribonucleoside molecules, with the formation of the corresponding free purine bases and pentose-1-phosphate. The sequence is that of Purine nucleoside phosphorylase DeoD-type from Shigella dysenteriae serotype 1 (strain Sd197).